Consider the following 1228-residue polypeptide: DNA repair protein rad5 (1228 aa).

Disordered stretches follow at residues 1 to 96 (MDRH…GTLT), 194 to 242 (PPVR…VLPS), 280 to 302 (QPPTVARKGQTKPGTPQSIPRVS), and 445 to 474 (KAMDKAKAGDHNTNGLASPPEEAEEGQELE). The span at 34–43 (PSSSPQFSAP) shows a compositional bias: low complexity. Residues 70 to 83 (HNDDDDDDDDDDDE) are compositionally biased toward acidic residues. Polar residues predominate over residues 211–237 (PKKSSTSQARSRSHAQAQPQPQSNTPT). The span at 445 to 454 (KAMDKAKAGD) shows a compositional bias: basic and acidic residues. Residues 465–474 (EEAEEGQELE) are compositionally biased toward acidic residues. Positions 574–784 (PKQEQHCLGG…FSLVRFLRVE (211 aa)) constitute a Helicase ATP-binding domain. 587–594 (DEMGLGKT) provides a ligand contact to ATP. The DEAH box signature appears at 735–738 (DEAH). An RING-type zinc finger spans residues 967 to 1012 (CPICAEEPMIDQAVTGCWHSACKKCLLDYIKHQTDRNEVPRCFQCR). The Helicase C-terminal domain occupies 1060-1216 (ALISHLRTLR…MMSDEEKKMQ (157 aa)).

Belongs to the SNF2/RAD54 helicase family.

The protein localises to the cytoplasm. The protein resides in the nucleus. In terms of biological role, probable helicase, member of the UBC2/RAD6 epistasis group. Functions with DNA repair protein uvs-2/rad18 in error-free postreplication DNA repair. Involved in the maintenance of wild-type rates of instability of simple repetitive sequences such as poly(GT) repeats. Seems to be involved in maintaining a balance which acts in favor of error-prone non-homologous joining during DNA double-strand breaks repairs. The polypeptide is DNA repair protein rad5 (mus-41) (Neurospora crassa (strain ATCC 24698 / 74-OR23-1A / CBS 708.71 / DSM 1257 / FGSC 987)).